A 120-amino-acid polypeptide reads, in one-letter code: ATP-dependent Clp protease adapter protein ClpS (120 aa).

It belongs to the ClpS family. In terms of assembly, binds to the N-terminal domain of the chaperone ClpA.

Its function is as follows. Involved in the modulation of the specificity of the ClpAP-mediated ATP-dependent protein degradation. The sequence is that of ATP-dependent Clp protease adapter protein ClpS from Pseudomonas syringae pv. syringae (strain B728a).